A 134-amino-acid chain; its full sequence is Small ribosomal subunit protein bS16 (134 aa).

The tract at residues 81–134 (LAKRPARSNPKKAEPGKKAQERLAAARQAEEEAKAAAEAAAAAPAEAPAEEAAS) is disordered. The span at 91–101 (KKAEPGKKAQE) shows a compositional bias: basic and acidic residues. Residues 116 to 134 (AAEAAAAAPAEAPAEEAAS) show a composition bias toward low complexity.

This sequence belongs to the bacterial ribosomal protein bS16 family.

The sequence is that of Small ribosomal subunit protein bS16 from Chelativorans sp. (strain BNC1).